The following is a 242-amino-acid chain: Probable proteasome subunit alpha type-7 (242 aa).

This sequence belongs to the peptidase T1A family. In terms of assembly, the 26S proteasome consists of a 20S proteasome core and two 19S regulatory subunits. The 20S proteasome core is composed of 28 subunits that are arranged in four stacked rings, resulting in a barrel-shaped structure. The two end rings are each formed by seven alpha subunits, and the two central rings are each formed by seven beta subunits. The catalytic chamber with the active sites is on the inside of the barrel.

It localises to the cytoplasm. Its subcellular location is the nucleus. Its function is as follows. The proteasome degrades poly-ubiquitinated proteins in the cytoplasm and in the nucleus. It is essential for the regulated turnover of proteins and for the removal of misfolded proteins. The proteasome is a multicatalytic proteinase complex that is characterized by its ability to cleave peptides with Arg, Phe, Tyr, Leu, and Glu adjacent to the leaving group at neutral or slightly basic pH. It has an ATP-dependent proteolytic activity. The sequence is that of Probable proteasome subunit alpha type-7 (PRE10) from Encephalitozoon cuniculi (strain GB-M1) (Microsporidian parasite).